Consider the following 492-residue polypeptide: Glutamyl-tRNA(Gln) amidotransferase subunit A (492 aa).

Residues lysine 79 and serine 154 each act as charge relay system in the active site. Serine 178 functions as the Acyl-ester intermediate in the catalytic mechanism.

Belongs to the amidase family. GatA subfamily. Heterotrimer of A, B and C subunits.

It catalyses the reaction L-glutamyl-tRNA(Gln) + L-glutamine + ATP + H2O = L-glutaminyl-tRNA(Gln) + L-glutamate + ADP + phosphate + H(+). In terms of biological role, allows the formation of correctly charged Gln-tRNA(Gln) through the transamidation of misacylated Glu-tRNA(Gln) in organisms which lack glutaminyl-tRNA synthetase. The reaction takes place in the presence of glutamine and ATP through an activated gamma-phospho-Glu-tRNA(Gln). The sequence is that of Glutamyl-tRNA(Gln) amidotransferase subunit A from Acinetobacter baumannii (strain AB0057).